The chain runs to 732 residues: Myosin heavy chain kinase B (732 aa).

An Alpha-type protein kinase domain is found at 124–328 (DPYTTTAQWT…ICQYLNLQSI (205 aa)). 298–303 (GIGNLG) provides a ligand contact to ATP. Positions 331–428 (KSEKSDCGTV…TNKERSKSKS (98 aa)) are disordered. The span at 356–394 (NNNNNNNNNNNNNNNNNNSNNNNNNNSSISKSLVEISSG) shows a compositional bias: low complexity. Basic and acidic residues predominate over residues 395-404 (SKERNDRDSP). The span at 405 to 419 (SRQLFVSNDGNTLNT) shows a compositional bias: polar residues. WD repeat units lie at residues 458–486 (KGYH…RVYD), 500–528 (GHEG…KVWD), 540–568 (GHDK…KVWD), 580–608 (SHAR…KVWD), 620–648 (GHTK…RVWN), 660–688 (GHDR…KIWD), and 700–730 (GHNA…RVWG).

The protein belongs to the protein kinase superfamily. Alpha-type protein kinase family. ALPK subfamily.

It carries out the reaction L-threonyl-[myosin heavy-chain] + ATP = O-phospho-L-threonyl-[myosin heavy-chain] + ADP + H(+). In terms of biological role, catalyzes its autophosphorylation, which is needed for enzymatic activity and phosphorylates myosin II heavy chain at a threonine in the C-terminal tail region. This phosphorylation is critical in regulating the assembly and disassembly of myosin II filament. Participates in control of myosin localization. In Dictyostelium discoideum (Social amoeba), this protein is Myosin heavy chain kinase B (mhkB).